The primary structure comprises 149 residues: Secreted RxLR effector protein 3 (149 aa).

Positions 1–23 are cleaved as a signal peptide; the sequence is MRASTILFVLGAAILAVIGVTTA. Positions 38–53 match the RxLR-dEER motif; the sequence is RLLRSGSMEQEPDEER.

This sequence belongs to the RxLR effector family.

The protein resides in the secreted. The protein localises to the host nucleus. It localises to the host cytoplasm. Its function is as follows. Secreted effector that completely suppresses the host cell death induced by cell death-inducing proteins. The sequence is that of Secreted RxLR effector protein 3 from Plasmopara viticola (Downy mildew of grapevine).